A 33-amino-acid polypeptide reads, in one-letter code: Photosystem II reaction center protein Psb30 (33 aa).

The chain crosses the membrane as a helical span at residues 5–25; the sequence is VIAQPIVLGLIVASGPLVIVS.

This sequence belongs to the Psb30/Ycf12 family. In terms of assembly, PSII is composed of 1 copy each of membrane proteins PsbA, PsbB, PsbC, PsbD, PsbE, PsbF, PsbH, PsbI, PsbJ, PsbK, PsbL, PsbM, PsbT, PsbX, PsbY, PsbZ, Psb30/Ycf12, peripheral proteins of the oxygen-evolving complex and a large number of cofactors. It forms dimeric complexes.

The protein resides in the plastid membrane. A core subunit of photosystem II (PSII), probably helps stabilize the reaction center. The protein is Photosystem II reaction center protein Psb30 of Aneura mirabilis (Parasitic liverwort).